Consider the following 196-residue polypeptide: DnaA initiator-associating protein DiaA (196 aa).

Residues 34–196 (VVQSLLNGNK…DNTLFPHQEV (163 aa)) form the SIS domain.

This sequence belongs to the SIS family. DiaA subfamily. Homotetramer; dimer of dimers.

Its function is as follows. Required for the timely initiation of chromosomal replication via direct interactions with the DnaA initiator protein. This is DnaA initiator-associating protein DiaA from Erwinia tasmaniensis (strain DSM 17950 / CFBP 7177 / CIP 109463 / NCPPB 4357 / Et1/99).